Here is a 249-residue protein sequence, read N- to C-terminus: Transmembrane protein 150C (249 aa).

Topologically, residues 1 to 9 (MDGKKCSVW) are cytoplasmic. Residues 10-30 (MFLPLVFTLFTSAGLWIVYFI) traverse the membrane as a helical segment. Residues 31 to 64 (AVEDDKILPLNSAARKSGVKHAPYISFAGDDPPA) lie on the Extracellular side of the membrane. Residues 65-85 (SCVFSQVMNMAAFLALVVAVL) traverse the membrane as a helical segment. At 86-97 (RFIQLKPKVLNP) the chain is on the cytoplasmic side. A helical transmembrane segment spans residues 98 to 118 (WLNISGLVALCLASFGMTLLG). At 119-130 (NFQLTNDEEIHN) the chain is on the extracellular side. A helical membrane pass occupies residues 131–151 (VGTSLTFGFGTLTCWIQAALT). The Cytoplasmic portion of the chain corresponds to 152–168 (LKVNIKNEGRRAGIPRV). A helical membrane pass occupies residues 169-189 (ILSAVITLCVVLYFILMAQDI). Over 190 to 192 (HMY) the chain is Extracellular. Residues 193–213 (AARVQWGLVMCFLAYFGTLAV) traverse the membrane as a helical segment. Residues 214–249 (EFRHYRYEIVCSEYQENFLSFSESLSEASEYQTDQV) lie on the Cytoplasmic side of the membrane.

This sequence belongs to the DRAM/TMEM150 family.

Its subcellular location is the cell membrane. The protein resides in the lysosome membrane. The enzyme catalyses Ca(2+)(in) = Ca(2+)(out). It carries out the reaction Na(+)(in) = Na(+)(out). It catalyses the reaction K(+)(in) = K(+)(out). The catalysed reaction is Mg(2+)(in) = Mg(2+)(out). Its function is as follows. Nonselective cationic channel with high permeability to Ca(2+). Component of a mechanosensitive cation channel. Confers mechanically activated (MA) currents with slow inactivation kinetics. May contribute to proprioception. In Rattus norvegicus (Rat), this protein is Transmembrane protein 150C (Tmem150c).